We begin with the raw amino-acid sequence, 225 residues long: O-methyltransferase rstn1 (225 aa).

The S-adenosyl-L-methionine site is built by Q97 and H142.

It belongs to the methyltransferase superfamily.

The catalysed reaction is desmethylrestrictinol + S-adenosyl-L-methionine = restrictinol + S-adenosyl-L-homocysteine + H(+). It functions in the pathway antifungal biosynthesis. Functionally, O-methyltransferase; part of the gene cluster that mediates the biosynthesis of the tetrahydropyranyl antifungal agent restricticin that acts as an inhibitor of CYP51 and blocks the ergosterol biosynthesis. Within the pathway, rstn1 uses S-adenosylmethionine to methylate position C4 of desmethylrestrictinol to produce restrictinol. The highly reducing polyketide synthase rstn3, the short chain dehydrogenase rstn4, the cyclase rstn5, the FAD-dependent monooxygenase rstn6 and the enoylreductase rstn7 are required to generate the first stable intermediate desmethylrestrictinol. Rstn3 with rstn7 biosynthesize the first polyketide chain intermediate that is reduced by rstn4, followed by epoxidation by rstn6 before 6-endo cyclization via epoxide opening by rstn5 leads to desmethylrestrictinol. The methyltransferase rstn1 then catalyzes the C4 O-methylation of desmethylrestrictinol to produce restrictinol, and the nonribosomal peptide synthetase rstn8 catalyzes the C3 esterification of restrictinol with glycine that leads to restricticin. The polypeptide is O-methyltransferase rstn1 (Aspergillus nomiae NRRL (strain ATCC 15546 / NRRL 13137 / CBS 260.88 / M93)).